Consider the following 184-residue polypeptide: ATP synthase subunit b, chloroplastic (184 aa).

A helical membrane pass occupies residues I31 to L49.

This sequence belongs to the ATPase B chain family. F-type ATPases have 2 components, F(1) - the catalytic core - and F(0) - the membrane proton channel. F(1) has five subunits: alpha(3), beta(3), gamma(1), delta(1), epsilon(1). F(0) has four main subunits: a(1), b(1), b'(1) and c(10-14). The alpha and beta chains form an alternating ring which encloses part of the gamma chain. F(1) is attached to F(0) by a central stalk formed by the gamma and epsilon chains, while a peripheral stalk is formed by the delta, b and b' chains.

The protein resides in the plastid. It localises to the chloroplast thylakoid membrane. Its function is as follows. F(1)F(0) ATP synthase produces ATP from ADP in the presence of a proton or sodium gradient. F-type ATPases consist of two structural domains, F(1) containing the extramembraneous catalytic core and F(0) containing the membrane proton channel, linked together by a central stalk and a peripheral stalk. During catalysis, ATP synthesis in the catalytic domain of F(1) is coupled via a rotary mechanism of the central stalk subunits to proton translocation. Functionally, component of the F(0) channel, it forms part of the peripheral stalk, linking F(1) to F(0). The chain is ATP synthase subunit b, chloroplastic from Pinus koraiensis (Korean pine).